A 1137-amino-acid chain; its full sequence is Ribonucleoside-diphosphate reductase large subunit (1137 aa).

The segment at 1–32 (MASRPAASSPVEARAPVGGQEAGGPSAATQGE) is disordered. The short motif at 64–84 (SYRISDNNFVQCGSNCTMIID) is the RIP homotypic interaction motif (RHIM) element. Disordered regions lie at residues 124 to 159 (GGTP…FTLG) and 173 to 315 (AVFG…YPVP). Over residues 131–141 (AGTSTGTQTAD) the composition is skewed to polar residues. The span at 196 to 206 (SDSDDSEDTDS) shows a compositional bias: acidic residues. The segment covering 281–290 (AGAGLAADPA) has biased composition (low complexity). The span at 291-304 (VARDDAEGLSDPRP) shows a compositional bias: basic and acidic residues. Residues T566, 581–582 (SC), G612, 791–795 (NLCTE), and 968–972 (PTAAS) each bind substrate. A disulfide bridge connects residues C582 and C808. N791 functions as the Proton acceptor in the catalytic mechanism. C793 acts as the Cysteine radical intermediate in catalysis. The active-site Proton acceptor is E795.

The protein belongs to the ribonucleoside diphosphate reductase large chain family. Heterotetramer composed of a homodimer of the large subunit (R1) and a homodimer of the small subunit (R2). Larger multisubunit protein complex are also active, composed of (R1)n(R2)n. Self-assembles (via RIP homotypic interaction motif/RHIM) into homomeric fibrillar amyloid structures. Interacts (via RHIM) with human RIPK1 (via RHIM). Interacts (via RHIM) with human RIPK3 (via RHIM); the interaction leads to heteromeric amyloid assemblies. Interacts (via RHIM) with human ZBP1 (via RHIM); the interaction leads to heteromeric amyloid assemblies. Interacts (via C-terminus) with host CASP8.

The enzyme catalyses a 2'-deoxyribonucleoside 5'-diphosphate + [thioredoxin]-disulfide + H2O = a ribonucleoside 5'-diphosphate + [thioredoxin]-dithiol. Its function is as follows. Ribonucleoside-diphosphate reductase holoenzyme that provides the precursors necessary for viral DNA synthesis. Allows virus growth in non-dividing cells, as well as reactivation from latency in infected hosts. Catalyzes the biosynthesis of deoxyribonucleotides from the corresponding ribonucleotides. Prevents host necroptosis by targeting host RIPK1 and RIPK3, thereby hampering the formation of necroptotic RIPK1-RIPK3 complexes. Forms hetero-amyloid structures with host proteins RIPK3 or ZBP1 which may prevent RIPK3- and ZBP1-mediated necroptosis. In addition, inhibits extrinsic apoptosis by targeting host CASP8. This chain is Ribonucleoside-diphosphate reductase large subunit, found in Human herpesvirus 1 (strain 17) (HHV-1).